The primary structure comprises 269 residues: Phosphate import ATP-binding protein PstB (269 aa).

The 244-residue stretch at Ile21 to Ile264 folds into the ABC transporter domain. Gly55–Thr62 is an ATP binding site.

Belongs to the ABC transporter superfamily. Phosphate importer (TC 3.A.1.7) family. As to quaternary structure, the complex is composed of two ATP-binding proteins (PstB), two transmembrane proteins (PstC and PstA) and a solute-binding protein (PstS).

It is found in the cell membrane. It catalyses the reaction phosphate(out) + ATP + H2O = ADP + 2 phosphate(in) + H(+). Part of the ABC transporter complex PstSACB involved in phosphate import. Responsible for energy coupling to the transport system. This chain is Phosphate import ATP-binding protein PstB, found in Mycoplasma capricolum subsp. capricolum (strain California kid / ATCC 27343 / NCTC 10154).